The primary structure comprises 592 residues: Transmembrane 9 superfamily member 3 (592 aa).

Residues 1 to 19 (MRLPTTLLLFIGALIFSGA) form the signal peptide. Residues 20 to 229 (GTVRSDASDH…SLPHHLEIHW (210 aa)) are Lumenal-facing. Residues 230 to 250 (FSIINSCVTVLLLTGFLATIL) traverse the membrane as a helical segment. Residues 251 to 302 (MRVLKNDFMKYAQDEEAADDQEETGWKYIHGDVFRFPKNKSLFAASLGSGTQ) lie on the Cytoplasmic side of the membrane. A helical transmembrane segment spans residues 303–323 (LFTLTIFIFMLSLVGVFYPYN). Topologically, residues 324-325 (RG) are lumenal. Residues 326-346 (ALFTALVVIYALTSGIAGYTA) form a helical membrane-spanning segment. At 347–365 (SSFYCQLEGKNWVRNLLLT) the chain is on the cytoplasmic side. Residues 366 to 386 (GGLFCGPLFLTFCFLNTVAIA) form a helical membrane-spanning segment. Residues 387–397 (YSATAALPFGT) lie on the Lumenal side of the membrane. A helical transmembrane segment spans residues 398 to 418 (IIVIVLIWTLVTSPLLVLGGI). Residues 419–452 (AGKNSKAEFQAPVRTTKYPREIPPLPWYRSAVPQ) lie on the Cytoplasmic side of the membrane. A helical membrane pass occupies residues 453-473 (MAMAGFLPFSAIYIELYYIFA). The Lumenal segment spans residues 474–485 (SVWGHRIYTIYS). A helical membrane pass occupies residues 486–506 (ILFIVFIILLIVTAFITVALT). Residues 507–521 (YFQLAAEDHEWWWRS) lie on the Cytoplasmic side of the membrane. Residues 522 to 542 (FLCGGSTGLFIYAYCLYYYYA) traverse the membrane as a helical segment. Residues 543-553 (RSDMSGFMQTS) lie on the Lumenal side of the membrane. A helical transmembrane segment spans residues 554–574 (FFFGYMACICYGFFLMLGTVG). Over 575 to 592 (FRAALLFVRHIYRSIKCE) the chain is Cytoplasmic. The Endoplasmic reticulum export signal motif lies at 581-586 (FVRHIY). The Golgi retention signal signature appears at 590 to 592 (KCE).

Belongs to the nonaspanin (TM9SF) (TC 9.A.2) family.

The protein resides in the endosome membrane. It localises to the golgi apparatus membrane. This chain is Transmembrane 9 superfamily member 3, found in Arabidopsis thaliana (Mouse-ear cress).